The chain runs to 620 residues: MAAATADPGAGSPQVGDSSGGATGCGLPSPGEQELSRRLQRLYPAVNQHETPLPRSWSPKDKYNYIGLSQGNLRVHYKGHGKNHKDAASVRATHPIPAACGIYYFEVKIVSKGRDGYMGIGLSAQGVNMNRLPGWDKHSYGYHGDDGHSFCSSGTGQPYGPTFTTGDVIGCCVNLINGTCFYTKNGHSLGIAFTDLPANLYPTVGLQTPGEIVDANFGQQPFLFDIEDYMREWRAKVQGTVHCFPISARLGEWQAVLQNMVSSYLVHHGYCATATAFARMTETPIQEEQASIKNRQKIQKLVLEGRVGEAIETTQRFYPGLLEHNPNLLFMLKCRQFVEMVNGTDSEVRSLSSRSPKSQDSYPGSPSLSPRHGPTSSHTHNTGADSPSCSNGVASTKSKQNHSKYPAPSSSSSSSSSSSSSSPSSVNYSESNSTDSTKSQPHSSTSNQETSDSEMEMEAEHYPNGVLESMSTRIVNGAYKHEDLQTDESSMDDGHPRRQLCGGNQAATERIILFGRELQALSEQLGREYGKDLAHTEMLQDAFSLLAYSDPWSCPVGQQLDPIQREPVCAALNSAILESQNLPKQPPLMLALGQASECLRLMARAGLGSCSFARVDDYLH.

The tract at residues 1–34 (MAAATADPGAGSPQVGDSSGGATGCGLPSPGEQE) is disordered. A2 bears the N-acetylalanine mark. The 188-residue stretch at 35 to 222 (LSRRLQRLYP…VDANFGQQPF (188 aa)) folds into the B30.2/SPRY domain. A LisH domain is found at 253 to 285 (WQAVLQNMVSSYLVHHGYCATATAFARMTETPI). Residues 291–348 (SIKNRQKIQKLVLEGRVGEAIETTQRFYPGLLEHNPNLLFMLKCRQFVEMVNGTDSEV) enclose the CTLH domain. A compositionally biased stretch (polar residues) spans 347 to 398 (EVRSLSSRSPKSQDSYPGSPSLSPRHGPTSSHTHNTGADSPSCSNGVASTKS). A disordered region spans residues 347–459 (EVRSLSSRSP…TSDSEMEMEA (113 aa)). S361 bears the Phosphoserine mark. Y362 is modified (phosphotyrosine). Residues S365, S367, S369, and S422 each carry the phosphoserine modification. A compositionally biased stretch (low complexity) spans 409–436 (SSSSSSSSSSSSSSPSSVNYSESNSTDS). The segment covering 437 to 450 (TKSQPHSSTSNQET) has biased composition (polar residues). Phosphoserine is present on residues S451 and S453.

It belongs to the RANBP9/10 family. May form homodimers. Identified in the CTLH complex that contains GID4, RANBP9 and/or RANBP10, MKLN1, MAEA, RMND5A (or alternatively its paralog RMND5B), GID8, ARMC8, WDR26 and YPEL5. Within this complex, MAEA, RMND5A (or alternatively its paralog RMND5B), GID8, WDR26, and RANBP9 and/or RANBP10 form the catalytic core, while GID4, MKLN1, ARMC8 and YPEL5 have ancillary roles. Interacts with RAN and RANBP9. Interacts with the HGF receptor MET. Interacts with AR. Interacts with TUBB1. Interacts with YPEL5. May interact with TUBB5. Interacts with DDX4.

The protein localises to the cytoplasm. It is found in the cytosol. The protein resides in the nucleus. May act as an adapter protein to couple membrane receptors to intracellular signaling pathways. Core component of the CTLH E3 ubiquitin-protein ligase complex that selectively accepts ubiquitin from UBE2H and mediates ubiquitination and subsequent proteasomal degradation of the transcription factor HBP1. Enhances dihydrotestosterone-induced transactivation activity of AR, as well as dexamethasone-induced transactivation activity of NR3C1, but does not affect estrogen-induced transactivation. Acts as a guanine nucleotide exchange factor (GEF) for RAN GTPase. May play an essential role in hemostasis and in maintaining microtubule dynamics with respect to both platelet shape and function. This Bos taurus (Bovine) protein is Ran-binding protein 10 (RANBP10).